Consider the following 100-residue polypeptide: Small ribosomal subunit protein bS18c (100 aa).

The disordered stretch occupies residues 81-100; sequence KQFERTESTPRTTGPRTRKK. The span at 89–100 shows a compositional bias: low complexity; the sequence is TPRTTGPRTRKK.

Belongs to the bacterial ribosomal protein bS18 family. Part of the 30S ribosomal subunit.

It is found in the plastid. The protein resides in the chloroplast. This Nandina domestica (Heavenly bamboo) protein is Small ribosomal subunit protein bS18c.